The sequence spans 399 residues: Elongation factor Tu (399 aa).

One can recognise a tr-type G domain in the interval 10-209 (KPHVNIGTIG…EVDAYIPTPE (200 aa)). A G1 region spans residues 19–26 (GHVDHGKT). 19-26 (GHVDHGKT) is a binding site for GTP. A Mg(2+)-binding site is contributed by Thr-26. The tract at residues 60–64 (GITIA) is G2. Positions 81–84 (DCPG) are G3. GTP-binding positions include 81–85 (DCPGH) and 136–139 (NKQD). The interval 136-139 (NKQD) is G4. Residues 174-176 (SAL) are G5.

The protein belongs to the TRAFAC class translation factor GTPase superfamily. Classic translation factor GTPase family. EF-Tu/EF-1A subfamily. As to quaternary structure, monomer.

It localises to the cytoplasm. It catalyses the reaction GTP + H2O = GDP + phosphate + H(+). In terms of biological role, GTP hydrolase that promotes the GTP-dependent binding of aminoacyl-tRNA to the A-site of ribosomes during protein biosynthesis. This is Elongation factor Tu from Helicobacter pylori (strain ATCC 700392 / 26695) (Campylobacter pylori).